Consider the following 478-residue polypeptide: Divinyl ether synthase CYP74D2 (478 aa).

Residue Cys431 participates in heme binding.

This sequence belongs to the cytochrome P450 family. 9-divinyl ether synthase subfamily. In terms of tissue distribution, expressed in roots.

The catalysed reaction is (9S)-hydroperoxy-(10E,12Z)-octadecadienoate = colneleate + H2O. It catalyses the reaction (9S)-hydroperoxy-(10E,12Z,15Z)-octadecatrienoate = colnelenate + H2O. Its function is as follows. Involved in the biosynthesis of the anti-fungal and antibacterial toxins colneleate and colnelenate. Can use (9S)-hydroperoxy-(10E,12Z)-octadecadienoate (9-HPOD) and (9S)-hydroperoxy-(10E,12Z,15Z)-octadecatrienoate (9-HPOT) as substrates but has no activity with the corresponding 13-hydroperoxides (13-HPOD and 13-HPOT). This is Divinyl ether synthase CYP74D2 from Solanum tuberosum (Potato).